A 221-amino-acid polypeptide reads, in one-letter code: Protein-L-isoaspartate O-methyltransferase (221 aa).

Serine 68 is a catalytic residue.

It belongs to the methyltransferase superfamily. L-isoaspartyl/D-aspartyl protein methyltransferase family.

Its subcellular location is the cytoplasm. It catalyses the reaction [protein]-L-isoaspartate + S-adenosyl-L-methionine = [protein]-L-isoaspartate alpha-methyl ester + S-adenosyl-L-homocysteine. Its function is as follows. Catalyzes the methyl esterification of L-isoaspartyl residues in peptides and proteins that result from spontaneous decomposition of normal L-aspartyl and L-asparaginyl residues. It plays a role in the repair and/or degradation of damaged proteins. The chain is Protein-L-isoaspartate O-methyltransferase from Desulfosudis oleivorans (strain DSM 6200 / JCM 39069 / Hxd3) (Desulfococcus oleovorans).